We begin with the raw amino-acid sequence, 116 residues long: Large ribosomal subunit protein bL20 (116 aa).

The protein belongs to the bacterial ribosomal protein bL20 family.

Binds directly to 23S ribosomal RNA and is necessary for the in vitro assembly process of the 50S ribosomal subunit. It is not involved in the protein synthesizing functions of that subunit. The protein is Large ribosomal subunit protein bL20 of Mycoplasmopsis pulmonis (strain UAB CTIP) (Mycoplasma pulmonis).